We begin with the raw amino-acid sequence, 384 residues long: Probable fructokinase-6, chloroplastic (384 aa).

A chloroplast-targeting transit peptide spans 1–46 (MALQATTTTFCFSGPTFRSTPHSLTSKRPISIKATTSSPSRLSNSR). A disordered region spans residues 34 to 61 (ATTSSPSRLSNSRSNLKGRALSSDGSTQ). Low complexity predominate over residues 35 to 48 (TTSSPSRLSNSRSN).

It belongs to the carbohydrate kinase PfkB family.

It localises to the plastid. Its subcellular location is the chloroplast. It catalyses the reaction D-fructose + ATP = D-fructose 6-phosphate + ADP + H(+). It participates in glycan biosynthesis; starch biosynthesis. In terms of biological role, may play an important role in maintaining the flux of carbon towards starch formation. The chain is Probable fructokinase-6, chloroplastic from Arabidopsis thaliana (Mouse-ear cress).